The following is a 135-amino-acid chain: MATFQFDLVSPEKLAFSGQVDQVDIPGVEGDFGVLAGHAPVVAVIRPGLLTITAGGNQQKIVVLGGLAEVSDKGLTVLADVATSVAELDTAQFAQTISSMESSLAGKQGSELDRAIERLDHYKSIQHQLNATAMH.

The protein belongs to the ATPase epsilon chain family. In terms of assembly, F-type ATPases have 2 components, CF(1) - the catalytic core - and CF(0) - the membrane proton channel. CF(1) has five subunits: alpha(3), beta(3), gamma(1), delta(1), epsilon(1). CF(0) has three main subunits: a, b and c.

The protein localises to the cell inner membrane. In terms of biological role, produces ATP from ADP in the presence of a proton gradient across the membrane. The sequence is that of ATP synthase epsilon chain from Rhodopseudomonas palustris (strain BisB18).